The chain runs to 83 residues: Small ribosomal subunit protein uS17 (83 aa).

This sequence belongs to the universal ribosomal protein uS17 family. In terms of assembly, part of the 30S ribosomal subunit.

Functionally, one of the primary rRNA binding proteins, it binds specifically to the 5'-end of 16S ribosomal RNA. The sequence is that of Small ribosomal subunit protein uS17 from Francisella tularensis subsp. tularensis (strain FSC 198).